A 101-amino-acid polypeptide reads, in one-letter code: Putative regulatory protein PrgT (101 aa).

Might be involved in the expression of prgA, but is not required for activation of the expression of prgB. This is Putative regulatory protein PrgT (prgT) from Enterococcus faecalis (strain ATCC 47077 / OG1RF).